Reading from the N-terminus, the 467-residue chain is Uronate isomerase (467 aa).

This sequence belongs to the metallo-dependent hydrolases superfamily. Uronate isomerase family.

It carries out the reaction D-glucuronate = D-fructuronate. The enzyme catalyses aldehydo-D-galacturonate = keto-D-tagaturonate. It functions in the pathway carbohydrate metabolism; pentose and glucuronate interconversion. The protein is Uronate isomerase of Mannheimia succiniciproducens (strain KCTC 0769BP / MBEL55E).